The chain runs to 127 residues: Large ribosomal subunit protein bL17 (127 aa).

It belongs to the bacterial ribosomal protein bL17 family. As to quaternary structure, part of the 50S ribosomal subunit. Contacts protein L32.

The sequence is that of Large ribosomal subunit protein bL17 from Legionella pneumophila (strain Corby).